Consider the following 150-residue polypeptide: Cytochrome c oxidase subunit 5A, mitochondrial (150 aa).

The N-terminal 41 residues, 1 to 41, are a transit peptide targeting the mitochondrion; it reads MLGAALRRCAVAATTWAGPRGLLHSARTPGPAAAIQSVRCY. The SIFI-degron motif lies at 2-20; it reads LGAALRRCAVAATTWAGPR. Residues lysine 87 and lysine 113 each carry the N6-acetyllysine modification. Threonine 141 carries the post-translational modification Phosphothreonine.

This sequence belongs to the cytochrome c oxidase subunit 5A family. Component of the cytochrome c oxidase (complex IV, CIV), a multisubunit enzyme composed of 14 subunits. The complex is composed of a catalytic core of 3 subunits MT-CO1, MT-CO2 and MT-CO3, encoded in the mitochondrial DNA, and 11 supernumerary subunits COX4I, COX5A, COX5B, COX6A, COX6B, COX6C, COX7A, COX7B, COX7C, COX8 and NDUFA4, which are encoded in the nuclear genome. The complex exists as a monomer or a dimer and forms supercomplexes (SCs) in the inner mitochondrial membrane with NADH-ubiquinone oxidoreductase (complex I, CI) and ubiquinol-cytochrome c oxidoreductase (cytochrome b-c1 complex, complex III, CIII), resulting in different assemblies (supercomplex SCI(1)III(2)IV(1) and megacomplex MCI(2)III(2)IV(2)). Interacts with AFG1L. Interacts with RAB5IF. In terms of processing, in response to mitochondrial stress, the precursor protein is ubiquitinated by the SIFI complex in the cytoplasm before mitochondrial import, leading to its degradation. Within the SIFI complex, UBR4 initiates ubiquitin chain that are further elongated or branched by KCMF1.

The protein localises to the mitochondrion inner membrane. The protein operates within energy metabolism; oxidative phosphorylation. Component of the cytochrome c oxidase, the last enzyme in the mitochondrial electron transport chain which drives oxidative phosphorylation. The respiratory chain contains 3 multisubunit complexes succinate dehydrogenase (complex II, CII), ubiquinol-cytochrome c oxidoreductase (cytochrome b-c1 complex, complex III, CIII) and cytochrome c oxidase (complex IV, CIV), that cooperate to transfer electrons derived from NADH and succinate to molecular oxygen, creating an electrochemical gradient over the inner membrane that drives transmembrane transport and the ATP synthase. Cytochrome c oxidase is the component of the respiratory chain that catalyzes the reduction of oxygen to water. Electrons originating from reduced cytochrome c in the intermembrane space (IMS) are transferred via the dinuclear copper A center (CU(A)) of subunit 2 and heme A of subunit 1 to the active site in subunit 1, a binuclear center (BNC) formed by heme A3 and copper B (CU(B)). The BNC reduces molecular oxygen to 2 water molecules using 4 electrons from cytochrome c in the IMS and 4 protons from the mitochondrial matrix. This is Cytochrome c oxidase subunit 5A, mitochondrial (COX5A) from Macaca mulatta (Rhesus macaque).